Consider the following 188-residue polypeptide: Chitin synthase 1 (188 aa).

The protein belongs to the chitin synthase family. Class I subfamily.

It localises to the cell membrane. The enzyme catalyses [(1-&gt;4)-N-acetyl-beta-D-glucosaminyl](n) + UDP-N-acetyl-alpha-D-glucosamine = [(1-&gt;4)-N-acetyl-beta-D-glucosaminyl](n+1) + UDP + H(+). Its function is as follows. Polymerizes chitin, a structural polymer of the cell wall and septum, by transferring the sugar moiety of UDP-GlcNAc to the non-reducing end of the growing chitin polymer. This Ajellomyces dermatitidis (Blastomyces dermatitidis) protein is Chitin synthase 1 (CHS1).